A 268-amino-acid polypeptide reads, in one-letter code: Small ribosomal subunit protein uS2 (268 aa).

It belongs to the universal ribosomal protein uS2 family.

The sequence is that of Small ribosomal subunit protein uS2 from Caulobacter vibrioides (strain ATCC 19089 / CIP 103742 / CB 15) (Caulobacter crescentus).